A 70-amino-acid polypeptide reads, in one-letter code: Fumarase D (70 aa).

It belongs to the FumD family.

It carries out the reaction (S)-malate = fumarate + H2O. Functionally, in vitro catalyzes the addition of water to fumarate, forming malate. Cannot catalyze the reverse reaction. Cannot use the cis-isomer maleate as substrate. The sequence is that of Fumarase D from Salmonella typhi.